Reading from the N-terminus, the 612-residue chain is Adherence factor (612 aa).

6 stretches are compositionally biased toward low complexity: residues 1-18 (MSSF…NLSS), 47-68 (SSMM…QQQQ), 94-106 (LQTQ…SATT), 115-141 (YNQQ…NNMQ), 182-203 (QSAQ…QPRS), and 218-228 (SRQVSGSGRST). Disordered stretches follow at residues 1-20 (MSSF…SSFQ), 46-68 (ASSM…QQQQ), 94-143 (LQTQ…MQFF), 179-273 (PQLQ…NNNK), 443-480 (KEKK…NTNN), 497-527 (SQLM…LSNN), and 546-612 (SQEQ…KQFY). A compositionally biased stretch (polar residues) spans 230 to 240 (AKKQSAITSGS). A compositionally biased stretch (low complexity) spans 254–272 (TSVANSTSTTTMTTTNNNN). Residues 443–457 (KEKKLTEKTIEQREQ) show a composition bias toward basic and acidic residues. Composition is skewed to polar residues over residues 465-480 (ANHS…NTNN) and 497-512 (SQLM…ATKI). Residues 555-571 (NQHHHNHQQHPLIHHHQ) show a composition bias toward basic residues. Over residues 585-606 (PSTIPTSSLSIQQQQQQQQQQL) the composition is skewed to low complexity.

In terms of biological role, surface antigen mediating adhesion and aggregation in S.cerevisiae. The protein is Adherence factor (ADF1) of Candida albicans (strain SC5314 / ATCC MYA-2876) (Yeast).